The chain runs to 233 residues: Endo-1,4-beta-xylanase 1 (233 aa).

Residues Met1–Ala20 form the signal peptide. A glycan (N-linked (GlcNAc...) asparagine) is linked at Asn27. Residues Gln40–Gln230 enclose the GH11 domain. The active-site Nucleophile is the Glu126. Glu217 (proton donor) is an active-site residue.

This sequence belongs to the glycosyl hydrolase 11 (cellulase G) family.

It is found in the secreted. The catalysed reaction is Endohydrolysis of (1-&gt;4)-beta-D-xylosidic linkages in xylans.. It participates in glycan degradation; xylan degradation. In terms of biological role, endo-1,4-beta-xylanase involved in the hydrolysis of xylan, a major structural heterogeneous polysaccharide found in plant biomass representing the second most abundant polysaccharide in the biosphere, after cellulose. Accounts for approximately 70 percent of the endoxylanase activity in the culture filtrate. This Pyricularia grisea (Crabgrass-specific blast fungus) protein is Endo-1,4-beta-xylanase 1 (XYL1).